Reading from the N-terminus, the 558-residue chain is Formate--tetrahydrofolate ligase (558 aa).

66 to 73 (TPAGEGKT) is a binding site for ATP.

The protein belongs to the formate--tetrahydrofolate ligase family.

It catalyses the reaction (6S)-5,6,7,8-tetrahydrofolate + formate + ATP = (6R)-10-formyltetrahydrofolate + ADP + phosphate. It functions in the pathway one-carbon metabolism; tetrahydrofolate interconversion. The protein is Formate--tetrahydrofolate ligase of Clostridioides difficile (strain 630) (Peptoclostridium difficile).